An 867-amino-acid chain; its full sequence is Leucine--tRNA ligase (867 aa).

The 'HIGH' region signature appears at 40–51 (PYPSGAGLHVGH). The short motif at 638-642 (KMSKS) is the 'KMSKS' region element. Lysine 641 is an ATP binding site.

This sequence belongs to the class-I aminoacyl-tRNA synthetase family.

Its subcellular location is the cytoplasm. The catalysed reaction is tRNA(Leu) + L-leucine + ATP = L-leucyl-tRNA(Leu) + AMP + diphosphate. The sequence is that of Leucine--tRNA ligase from Leptospira biflexa serovar Patoc (strain Patoc 1 / Ames).